The following is a 512-amino-acid chain: Extracellular serine/threonine protein kinase CeFam20 (512 aa).

Residues 1–6 (MRCNIK) are Cytoplasmic-facing. The helical; Signal-anchor for type II membrane protein transmembrane segment at 7 to 26 (RLFTLAIGVFAATLVIISFS) threads the bilayer. The Lumenal segment spans residues 27 to 512 (KDNYEREWKQ…QDKKDDKKTV (486 aa)). Residues Cys110 and Cys144 are joined by a disulfide bond. The N-linked (GlcNAc...) asparagine glycan is linked to Asn113. Residues Gln176, Lys192, and Glu213 each contribute to the ATP site. Residue Glu213 coordinates Mn(2+). N-linked (GlcNAc...) asparagine glycosylation occurs at Asn242. 2 disulfides stabilise this stretch: Cys268/Cys284 and Cys273/Cys277. 295–298 (QVFL) lines the ATP pocket. 2 cysteine pairs are disulfide-bonded: Cys333/Cys409 and Cys410/Cys469. Residue Asp366 is part of the active site. 2 residues coordinate ATP: Glu371 and Asp387. Asp387 serves as a coordination point for Mn(2+). Positions 486-512 (PDVSDAEQNDEEQSEEHQDKKDDKKTV) are disordered. Residues 489 to 499 (SDAEQNDEEQS) show a composition bias toward acidic residues. Basic and acidic residues predominate over residues 500–512 (EEHQDKKDDKKTV).

It belongs to the FAM20 family. Requires Mn(2+) as cofactor.

It localises to the golgi apparatus membrane. The protein localises to the secreted. It catalyses the reaction L-seryl-[protein] + ATP = O-phospho-L-seryl-[protein] + ADP + H(+). The enzyme catalyses L-threonyl-[protein] + ATP = O-phospho-L-threonyl-[protein] + ADP + H(+). In terms of biological role, golgi serine/threonine protein kinase that phosphorylates secretory pathway proteins within Ser-x-Glu/pSer motifs. The protein is Extracellular serine/threonine protein kinase CeFam20 of Caenorhabditis elegans.